A 347-amino-acid chain; its full sequence is Farnesyl pyrophosphate synthase ERG20 (347 aa).

Residues Lys50, Arg53, and Gln88 each contribute to the isopentenyl diphosphate site. Mg(2+) contacts are provided by Asp95 and Asp99. Residue Arg104 coordinates dimethylallyl diphosphate. Residue Arg105 participates in isopentenyl diphosphate binding. Residues Lys192, Thr193, Gln232, Lys249, and Lys258 each contribute to the dimethylallyl diphosphate site.

This sequence belongs to the FPP/GGPP synthase family. It depends on Mg(2+) as a cofactor.

It catalyses the reaction isopentenyl diphosphate + dimethylallyl diphosphate = (2E)-geranyl diphosphate + diphosphate. The enzyme catalyses isopentenyl diphosphate + (2E)-geranyl diphosphate = (2E,6E)-farnesyl diphosphate + diphosphate. Its pathway is isoprenoid biosynthesis; farnesyl diphosphate biosynthesis; farnesyl diphosphate from geranyl diphosphate and isopentenyl diphosphate: step 1/1. The protein operates within isoprenoid biosynthesis; geranyl diphosphate biosynthesis; geranyl diphosphate from dimethylallyl diphosphate and isopentenyl diphosphate: step 1/1. Its function is as follows. Farnesyl pyrophosphate synthase; part of the second module of ergosterol biosynthesis pathway that includes the middle steps of the pathway. ERG20 catalyzes the sequential condensation of isopentenyl pyrophosphate with dimethylallyl pyrophosphate, and then with the resultant geranylpyrophosphate to the ultimate product farnesyl pyrophosphate. The second module is carried out in the vacuole and involves the formation of farnesyl diphosphate, which is also an important intermediate in the biosynthesis of ubiquinone, dolichol, heme and prenylated proteins. Activity by the mevalonate kinase ERG12 (FG05912) first converts mevalonate into 5-phosphomevalonate. 5-phosphomevalonate is then further converted to 5-diphosphomevalonate by the phosphomevalonate kinase ERG8 (FG09764). The diphosphomevalonate decarboxylase ERG19 (FG10424) then produces isopentenyl diphosphate. The isopentenyl-diphosphate delta-isomerase IDI1 (FG09722) then catalyzes the 1,3-allylic rearrangement of the homoallylic substrate isopentenyl (IPP) to its highly electrophilic allylic isomer, dimethylallyl diphosphate (DMAPP). Finally the farnesyl diphosphate synthase ERG20 (FG06784) catalyzes the sequential condensation of isopentenyl pyrophosphate with dimethylallyl pyrophosphate, and then with the resultant geranylpyrophosphate to the ultimate product farnesyl pyrophosphate. This Gibberella zeae (strain ATCC MYA-4620 / CBS 123657 / FGSC 9075 / NRRL 31084 / PH-1) (Wheat head blight fungus) protein is Farnesyl pyrophosphate synthase ERG20.